A 369-amino-acid polypeptide reads, in one-letter code: RNA-binding protein rnp24 (369 aa).

3 disordered regions span residues 1–77 (MEPI…KKKE), 200–219 (TDFSGRPSKPANTLSKTASI), and 304–369 (RMRN…IKFD). Positions 105 to 206 (WGIWVGNLSF…KSNTDFSGRP (102 aa)) constitute an RRM 1 domain. Residues 209 to 219 (PANTLSKTASI) show a composition bias toward polar residues. Residues 228–310 (SILFVGNLDF…RSKRMRNKSP (83 aa)) form the RRM 2 domain. Basic and acidic residues predominate over residues 325-341 (QEDKPNFKRARKIDPRS). Low complexity predominate over residues 346 to 357 (AALAKAQRSSAA).

It localises to the nucleus. The polypeptide is RNA-binding protein rnp24 (rnp24) (Schizosaccharomyces pombe (strain 972 / ATCC 24843) (Fission yeast)).